We begin with the raw amino-acid sequence, 327 residues long: Protein CONSERVED IN THE GREEN LINEAGE AND DIATOMS 27, chloroplastic (327 aa).

Residues 1–59 (MLRLIVNYPLIPKISHRVCSNSSSKLGSYYDSSSIIKYGGISDVVGKKQELFLSVSVKA) constitute a chloroplast transit peptide. The segment at 66-88 (NGGGSMSFSGQSWDPSSEIEVPS) is disordered. The next 3 membrane-spanning stretches (helical) occupy residues 119–139 (LGGLWLVTFTVLGVPVAAASF), 148–168 (FILAAGTGTLFLVSLIVLRIY), and 225–245 (LIGTGALLVSAFVLFVFATPV).

In terms of tissue distribution, mostly expressed in seeds, leaves and flowers, and, to a lower extent, in roots.

Its subcellular location is the membrane. The protein localises to the plastid. It is found in the chloroplast. Its function is as follows. Required for growth in low iron conditions. This is Protein CONSERVED IN THE GREEN LINEAGE AND DIATOMS 27, chloroplastic from Arabidopsis thaliana (Mouse-ear cress).